A 260-amino-acid chain; its full sequence is UPF0246 protein Bamb_2261 (260 aa).

It belongs to the UPF0246 family.

This chain is UPF0246 protein Bamb_2261, found in Burkholderia ambifaria (strain ATCC BAA-244 / DSM 16087 / CCUG 44356 / LMG 19182 / AMMD) (Burkholderia cepacia (strain AMMD)).